The primary structure comprises 149 residues: Hordoindoline-A (149 aa).

An N-terminal signal peptide occupies residues 1 to 19; that stretch reads MKALFLMGLLALVASAAFA. The propeptide occupies 20 to 28; sequence QYGEVVGSY. The propeptide at 148–149 is removed in mature form; the sequence is YW.

Post-translationally, five disulfide bonds are present. In terms of tissue distribution, found in endosperm and aleurone layer of developing kernels, but not in the embryo.

The protein localises to the membrane. The protein resides in the secreted. It localises to the extracellular space. In terms of biological role, acts as a membranotoxin, probably through its antibacterial and antifungal activities, contributing to the defense mechanism of the plant against predators. Forms monovalent cation-selective ion channels in membranes. Contributes to grain texture and hardness. The sequence is that of Hordoindoline-A (HINA) from Hordeum vulgare (Barley).